Reading from the N-terminus, the 580-residue chain is Rap guanine nucleotide exchange factor 5 (580 aa).

Residues 68–201 (DRYVVVSGTP…ELKEFQKILG (134 aa)) form the N-terminal Ras-GEF domain. One can recognise a Ras-GEF domain in the interval 345 to 579 (NTWDLALELM…FELSHRIEPR (235 aa)).

In terms of tissue distribution, widely expressed with highest levels in brain.

Its subcellular location is the nucleus. Functionally, guanine nucleotide exchange factor (GEF) for RAP1A, RAP2A and MRAS/M-Ras-GTP. Its association with MRAS inhibits Rap1 activation. The chain is Rap guanine nucleotide exchange factor 5 (RAPGEF5) from Homo sapiens (Human).